The chain runs to 362 residues: Myricetin 3'-O-methyltransferase 4 (362 aa).

Aspartate 229 contributes to the S-adenosyl-L-methionine binding site. The active-site Proton acceptor is the histidine 267.

It belongs to the class I-like SAM-binding methyltransferase superfamily. Cation-independent O-methyltransferase family. In terms of assembly, homodimer. As to expression, mainly expressed in stem and petiole trichomes.

It carries out the reaction myricetin + S-adenosyl-L-methionine = laricitrin + S-adenosyl-L-homocysteine + H(+). Its pathway is flavonoid metabolism. Functionally, flavonoid 3'-O-methyltransferase involved in the biosynthesis of polymethoxylated flavonoids natural products such as myricetin derivatives, aroma compounds possessing antioxidant properties and exhibiting pharmacological activities such as anti-carcinogen, anti-viral, anti-thrombotic, anti-diabetic, anti-atherosclerotic, and anti-inflammatory effects. Catalyzes S-adenosylmethionine-dependent regioselective 3'-O-methylation of flavonoids; active on various hydroxylated flavonoid substrates, including myricetin, thus producing 3'-methyl myricetin (laricitrin). The polypeptide is Myricetin 3'-O-methyltransferase 4 (Solanum lycopersicum (Tomato)).